The following is a 175-amino-acid chain: ATP synthase subunit b (175 aa).

The chain crosses the membrane as a helical span at residues 14–34 (LNPNPGLIFWTALTFLIVLVI).

This sequence belongs to the ATPase B chain family. F-type ATPases have 2 components, F(1) - the catalytic core - and F(0) - the membrane proton channel. F(1) has five subunits: alpha(3), beta(3), gamma(1), delta(1), epsilon(1). F(0) has four main subunits: a(1), b(2) and c(10-14). The alpha and beta chains form an alternating ring which encloses part of the gamma chain. F(1) is attached to F(0) by a central stalk formed by the gamma and epsilon chains, while a peripheral stalk is formed by the delta and b chains.

The protein resides in the cell inner membrane. Functionally, f(1)F(0) ATP synthase produces ATP from ADP in the presence of a proton or sodium gradient. F-type ATPases consist of two structural domains, F(1) containing the extramembraneous catalytic core and F(0) containing the membrane proton channel, linked together by a central stalk and a peripheral stalk. During catalysis, ATP synthesis in the catalytic domain of F(1) is coupled via a rotary mechanism of the central stalk subunits to proton translocation. Component of the F(0) channel, it forms part of the peripheral stalk, linking F(1) to F(0). The protein is ATP synthase subunit b of Chlorobaculum tepidum (strain ATCC 49652 / DSM 12025 / NBRC 103806 / TLS) (Chlorobium tepidum).